A 192-amino-acid chain; its full sequence is UPF0312 protein YE1254 (192 aa).

Residues M1 to A23 form the signal peptide.

It belongs to the UPF0312 family. Type 1 subfamily.

It is found in the periplasm. The protein is UPF0312 protein YE1254 of Yersinia enterocolitica serotype O:8 / biotype 1B (strain NCTC 13174 / 8081).